We begin with the raw amino-acid sequence, 161 residues long: Nucleotide-binding protein SAR11_0692 (161 aa).

It belongs to the YajQ family.

Functionally, nucleotide-binding protein. The polypeptide is Nucleotide-binding protein SAR11_0692 (Pelagibacter ubique (strain HTCC1062)).